The chain runs to 517 residues: Protein BTN1 (517 aa).

8 consecutive transmembrane segments (helical) span residues 24–44 (LFAA…IILS), 57–77 (GVVA…WPLL), 88–108 (VGFC…SSSL), 112–132 (LLGI…FLQL), 146–166 (LGAW…IWWL), 169–189 (GLGV…FPIT), 371–391 (PAII…TFFF), and 409–429 (SITI…SGYV).

The protein belongs to the battenin family.

The protein localises to the vacuole membrane. In terms of biological role, involved in vacuolar transport and vacuole pH homeostasis. Also required for cytokinesis. The protein is Protein BTN1 (BTN1) of Cryptococcus neoformans var. neoformans serotype D (strain B-3501A) (Filobasidiella neoformans).